A 474-amino-acid polypeptide reads, in one-letter code: PTS system MurNAc-GlcNAc-specific EIIBC component (474 aa).

The 83-residue stretch at 5–87 folds into the PTS EIIB type-1 domain; the sequence is ERLAKDITHA…ADQSGATLAE (83 aa). Cys27 functions as the Phosphocysteine intermediate; for EIIB activity in the catalytic mechanism. In terms of domain architecture, PTS EIIC type-1 spans 124 to 474; the sequence is KSIANIFIPL…GTTKEMRNPE (351 aa). 10 helical membrane-spanning segments follow: residues 129–149, 167–187, 193–213, 228–248, 268–288, 299–319, 343–363, 378–398, 402–422, and 444–464; these read IFIP…IAAI, IVTV…IFTG, VFGA…LTGI, LAAG…LSMV, ITLL…AGFV, IIGV…LPLV, LLPI…ALWV, ALPV…TLPL, FFTA…IGHI, and LGYI…TYFF.

The protein resides in the cell membrane. It catalyses the reaction N-acetyl-beta-D-muramate-(1-&gt;4)-N-acetyl-D-glucosamine(out) + N(pros)-phospho-L-histidyl-[protein] = 6-phospho-N-acetyl-beta-D-muramate-(1-&gt;4)-N-acetyl-D-glucosamine(in) + L-histidyl-[protein]. It participates in cell wall biogenesis; peptidoglycan recycling. The phosphoenolpyruvate-dependent sugar phosphotransferase system (sugar PTS), a major carbohydrate active transport system, catalyzes the phosphorylation of incoming sugar substrates concomitantly with their translocation across the cell membrane. This system is involved in the uptake and phosphorylation of MurNAc-GlcNAc, the principle peptidoglycan turnover product of S.aureus, yielding cytoplasmic MurNAc 6P-GlcNAc. This chain is PTS system MurNAc-GlcNAc-specific EIIBC component, found in Staphylococcus epidermidis (strain ATCC 35984 / DSM 28319 / BCRC 17069 / CCUG 31568 / BM 3577 / RP62A).